A 63-amino-acid polypeptide reads, in one-letter code: Protein DsrB (63 aa).

It belongs to the DsrB family.

This chain is Protein DsrB, found in Yersinia enterocolitica serotype O:8 / biotype 1B (strain NCTC 13174 / 8081).